Here is a 455-residue protein sequence, read N- to C-terminus: Tyramine receptor Ser-2 (455 aa).

Residues 1–60 lie on the Extracellular side of the membrane; the sequence is MFRNYTDSVQEMVLRAIDSIRDSVINASSAVSTTTLPPLDIPMTSMKPPSIIPTVELVLG. Asn4 and Asn26 each carry an N-linked (GlcNAc...) asparagine glycan. A helical membrane pass occupies residues 61 to 83; sequence TITYLVIIAMTVVGNTLVVVAVF. The Cytoplasmic segment spans residues 84–93; sequence SYRPLKKVQN. Residues 94-115 traverse the membrane as a helical segment; sequence YFLVSLAASDLAVAIFVMPLHV. Residues 116–133 lie on the Extracellular side of the membrane; sequence VTFLAGGKWLLGVTVCQF. Cys131 and Cys209 are oxidised to a cystine. A helical transmembrane segment spans residues 134–154; the sequence is FTTADILLCTSSILNLCAIAL. Topologically, residues 155-174 are cytoplasmic; that stretch reads DRYWAIHNPINYAQKRTTKF. Residues 175–197 traverse the membrane as a helical segment; the sequence is VCIVIVIVWILSMLISVPPIIGW. The Extracellular segment spans residues 198–221; sequence NNWQENMMEDSCGLSTEKAFVVFS. Residues 222-243 form a helical membrane-spanning segment; it reads AAGSFFLPLLVMVVVYVKIFIS. Topologically, residues 244–370 are cytoplasmic; the sequence is ARQRIRTNRG…VAKEKRAAKT (127 aa). Residues 371 to 392 form a helical membrane-spanning segment; that stretch reads IAVIIFVFSFCWLPFFVAYVIR. Residues 393–407 are Extracellular-facing; it reads PFCETCKLHAKVEQA. A helical membrane pass occupies residues 408–428; sequence FTWLGYINSSLNPFLYGILNL. Residues 429–455 are Cytoplasmic-facing; the sequence is EFRRAFKKILCPKAVLEQRRRRMSAQP.

Belongs to the G-protein coupled receptor 1 family. As to expression, the different isoforms are expressed in specific, but overlapping sets of sensory, inter- and motor neurons, including AIY, AIZ and RIA interneurons. They are also expressed in pharyngeal cells, head muscles and excretory gland cells.

The protein resides in the cell membrane. Functionally, G-protein coupled receptor for tyramine, a known neurotransmitter and neuromodulator and direct precursor of octopamine. The rank order of potency is tyramine &gt; octopamine &gt; dopamine &gt; serotonin &gt; epinephrine = norepinephrine. The sequence is that of Tyramine receptor Ser-2 (ser-2) from Caenorhabditis elegans.